We begin with the raw amino-acid sequence, 1006 residues long: Pentatricopeptide repeat-containing protein At1g30610, chloroplastic (1006 aa).

A chloroplast-targeting transit peptide spans 1–40; it reads MAVTISTNAFVNASLLDESRNSFWRPLFHQPYYNCRRVVR. 2 disordered regions span residues 180-219 and 248-292; these read LSKS…ERGS and SSVA…IARG. Residues 194 to 219 are compositionally biased toward basic and acidic residues; that stretch reads ESFRKRYSKQEYHRSSDTSRGIERGS. Residues 254–263 show a composition bias toward polar residues; sequence WSNSGESSVT. A compositionally biased stretch (basic and acidic residues) spans 265–284; it reads PKDESFRRRYSKQEHHRSSD. PPR repeat units follow at residues 468 to 502, 506 to 536, 542 to 572, 592 to 626, 627 to 657, 661 to 695, 759 to 789, 793 to 827, 840 to 874, and 875 to 909; these read TDYT…DRYK, IRII…MLLQ, DMVA…MRSP, DVVV…GQKP, SPVT…MQKS, NALA…GIVG, LVVT…MKKV, NLVT…GNHI, DTYT…GYHF, and NAKR…NRIP.

It belongs to the PPR family. P subfamily.

It localises to the plastid. The protein localises to the chloroplast. Functionally, may play a role in embryogenesis. This is Pentatricopeptide repeat-containing protein At1g30610, chloroplastic (EMB2279) from Arabidopsis thaliana (Mouse-ear cress).